We begin with the raw amino-acid sequence, 307 residues long: MAEYQNFFNQVQVAGAPEMGLKEDVDTFERTPAGMFNILGWMGNAQIGPIYLGIAGTVSLAFGAAWFFTIGVWYWYQAGFDPFIFMRDLFFFSLEPPPAEYGLAIAPLKQGGVWQIASLFMAISVIAWWVRVYTRADQLGMGKHMAWAFLSAIWLWSVLGFWRPILMGSWSVAPPYGIFSHLDWTNQFSLDHGNLFYNPFHGLSIAALYGSALLFAMHGATILAVTRFGGERELEQIVDRGTASERAALFWRWTMGFNATMEGIHRWAIWMAVMVTLTGGIGILLSGTVVDNWYVWAQVHGYAPVTP.

The next 3 membrane-spanning stretches (helical) occupy residues 52 to 78, 110 to 139, and 142 to 167; these read LGIAGTVSLAFGAAWFFTIGVWYWYQA, QGGVWQIASLFMAISVIAWWVRVYTRADQL, and GKHMAWAFLSAIWLWSVLGFWRPILM. (7R,8Z)-bacteriochlorophyll b is bound by residues histidine 181 and histidine 201. A helical transmembrane segment spans residues 197-225; it reads YNPFHGLSIAALYGSALLFAMHGATILAV. Fe cation-binding residues include histidine 218 and glutamate 233. An a ubiquinone-binding site is contributed by tryptophan 251. The helical transmembrane segment at 259 to 285 threads the bilayer; the sequence is ATMEGIHRWAIWMAVMVTLTGGIGILL. Position 265 (histidine 265) interacts with Fe cation.

Belongs to the reaction center PufL/M/PsbA/D family. As to quaternary structure, reaction center is composed of four bacteriochlorophylls, two bacteriopheophytins, two ubiquinones, one iron, and three highly hydrophobic polypeptide chains (designated L, M, and H).

The protein resides in the cellular chromatophore membrane. Its function is as follows. The reaction center is a membrane-bound complex that mediates the initial photochemical event in the electron transfer process of photosynthesis. This chain is Reaction center protein M chain (pufM), found in Rhodobacter capsulatus (Rhodopseudomonas capsulata).